Reading from the N-terminus, the 93-residue chain is Small ribosomal subunit protein uS19 (93 aa).

It belongs to the universal ribosomal protein uS19 family.

Protein S19 forms a complex with S13 that binds strongly to the 16S ribosomal RNA. This chain is Small ribosomal subunit protein uS19, found in Rhodococcus erythropolis (strain PR4 / NBRC 100887).